We begin with the raw amino-acid sequence, 236 residues long: Carbonyl reductase family member 4 (236 aa).

NADP(+)-binding positions include 11–14 (SRGI), 34–35 (RD), aspartate 55, and 82–84 (SAG). Residue serine 134 participates in substrate binding. NADP(+) is bound by residues tyrosine 147, lysine 151, and 180–182 (IHT). The Proton acceptor role is filled by tyrosine 147.

This sequence belongs to the short-chain dehydrogenases/reductases (SDR) family. Homotetramer (in vitro). Heterotetramer with HSD17B8; contains two molecules each of HSD17B8 and CBR4.

The protein localises to the mitochondrion matrix. It participates in lipid metabolism; fatty acid biosynthesis. Its function is as follows. The heterotetramer with HSD17B8 has NADH-dependent 3-ketoacyl-acyl carrier protein reductase activity, and thereby plays a role in mitochondrial fatty acid biosynthesis. Within the heterotetramer, HSD17B8 binds NADH; CBR4 binds NADPD. The homotetramer has NADPH-dependent quinone reductase activity. Both homotetramer and the heterotetramer have broad in vitro substrate specificity and can reduce 9,10-phenanthrenequinone, 1,4-benzoquinone and various other o-quinones and p-quinones. This Xenopus tropicalis (Western clawed frog) protein is Carbonyl reductase family member 4 (cbr4).